The chain runs to 418 residues: Phosphoglycerate kinase (418 aa).

14 residues coordinate (2R)-3-phosphoglycerate: Val23, Asp24, Phe25, Asn26, Gln39, Arg40, Ser63, His64, Gly66, Arg67, Leu122, Arg123, His170, and Arg171. Gly214 is a binding site for ADP. Gly214 is a CDP binding site. AMP-binding residues include Ala215 and Lys216. Position 215 (Ala215) interacts with ATP. Ala215 contacts Mg(2+). Residue Asp219 coordinates CDP. Asp219 provides a ligand contact to Mg(2+). Lys220 is an AMP binding site. Lys220 lines the ATP pocket. Gly238 contributes to the ADP binding site. Gly238 is a CDP binding site. The AMP site is built by Gly239 and Gly313. Residues Gly239 and Gly313 each coordinate ATP. The CDP site is built by Gly338, Ala340, and Phe343. Phe343 is an ADP binding site. Glu344 provides a ligand contact to AMP. 3 residues coordinate ATP: Glu344, Asp375, and Thr376. A Mg(2+)-binding site is contributed by Asp375.

Belongs to the phosphoglycerate kinase family. Monomer. The cofactor is Mg(2+).

The protein resides in the cytoplasm. It localises to the mitochondrion. It carries out the reaction (2R)-3-phosphoglycerate + ATP = (2R)-3-phospho-glyceroyl phosphate + ADP. The protein operates within carbohydrate degradation; glycolysis; pyruvate from D-glyceraldehyde 3-phosphate: step 2/5. Functionally, catalyzes one of the two ATP producing reactions in the glycolytic pathway via the reversible conversion of 1,3-diphosphoglycerate to 3-phosphoglycerate. Both L- and D- forms of purine and pyrimidine nucleotides can be used as substrates, but the activity is much lower on pyrimidines. Negatively regulates the biosynthesis of acetyl-CoA from pyruvate in the mitochondrion. This chain is Phosphoglycerate kinase (pgk-1), found in Neurospora crassa (strain ATCC 24698 / 74-OR23-1A / CBS 708.71 / DSM 1257 / FGSC 987).